Here is a 235-residue protein sequence, read N- to C-terminus: Ribonuclease PH (235 aa).

Phosphate contacts are provided by residues arginine 86 and glycine 124–arginine 126.

This sequence belongs to the RNase PH family. Homohexameric ring arranged as a trimer of dimers.

It catalyses the reaction tRNA(n+1) + phosphate = tRNA(n) + a ribonucleoside 5'-diphosphate. Functionally, phosphorolytic 3'-5' exoribonuclease that plays an important role in tRNA 3'-end maturation. Removes nucleotide residues following the 3'-CCA terminus of tRNAs; can also add nucleotides to the ends of RNA molecules by using nucleoside diphosphates as substrates, but this may not be physiologically important. Probably plays a role in initiation of 16S rRNA degradation (leading to ribosome degradation) during starvation. This is Ribonuclease PH from Francisella tularensis subsp. novicida (strain U112).